Reading from the N-terminus, the 335-residue chain is Fructose-1,6-bisphosphatase class 1 (335 aa).

Positions 92, 114, 116, and 117 each coordinate Mg(2+). Substrate-binding positions include 117–120, Asn210, Tyr242, and Lys274; that span reads DGSS. Glu280 serves as a coordination point for Mg(2+).

It belongs to the FBPase class 1 family. Homotetramer. Requires Mg(2+) as cofactor.

It is found in the cytoplasm. It carries out the reaction beta-D-fructose 1,6-bisphosphate + H2O = beta-D-fructose 6-phosphate + phosphate. Its pathway is carbohydrate biosynthesis; gluconeogenesis. The protein is Fructose-1,6-bisphosphatase class 1 of Lawsonia intracellularis (strain PHE/MN1-00).